A 796-amino-acid polypeptide reads, in one-letter code: uncharacterized protein (796 aa).

It is found in the mitochondrion. This is an uncharacterized protein from Dictyostelium discoideum (Social amoeba).